We begin with the raw amino-acid sequence, 586 residues long: MLSILMQGLRLKKCFLPILVMFFLAGCVNLLGSSFTASLKNDANASSDFYIRKIEQTQNQQDLQTYKLLAARVLVTENKIPQAEAYLAELIDLNDEQKLDKSLIEAHISAVKGKNETAEYQLSLIHLTSLSPSQKSRYYEIVSRIAENRHDNISAIKARIQMDNFLSDIQRKQQNNDRTWALLRNTDSEVLNNTDAEGNITLSGWLTLAQLYNDNLNQPAQLIQTLLTWKNYYPTHTAAHLLPTELQGLANFQQTTLTQVGLILPLSGNTRLIGETIKNGFDDAKVNYNVQVHVFDSMKMSIEQIINQAKKQGINTLVGPLLKQNVDVIVNNPYLVQDLNVLALNSTPNARAIEHLCYYGLSPEDEAESAASKMWNDTVRIPLVLVPQNNLGRRTAAAFTLRWQQLLGTDANIKFYNQTADINFALKSGLSESTDGVYIIANNKQLAEIKAVLDNINPTLKLYASSRSNSPNSGPEHRLFLNNLQFSDIPFFKDRESEQYKKIEKMTNNDYSLMHLYAMGYDAWLLINQFNEFRQIPGFTIDGLTGKLSAGPNCNVERDMTWFQYQNGSIYPLNEQDDSIYLINEE.

A signal peptide spans 1 to 26 (MLSILMQGLRLKKCFLPILVMFFLAG). The N-palmitoyl cysteine moiety is linked to residue cysteine 27. Cysteine 27 carries the S-diacylglycerol cysteine lipid modification.

This sequence belongs to the LpoA family. In terms of assembly, interacts with PBP1a.

The protein resides in the cell outer membrane. Functionally, regulator of peptidoglycan synthesis that is essential for the function of penicillin-binding protein 1A (PBP1a). This chain is Penicillin-binding protein activator LpoA, found in Histophilus somni (strain 2336) (Haemophilus somnus).